The following is a 416-amino-acid chain: Phosphoglycerate kinase (416 aa).

Substrate is bound by residues Asp28 to Asn30, Arg44, His65 to Arg68, Arg122, and Arg162. Residues Glu337 and Gly362–Ile365 each bind ATP.

This sequence belongs to the phosphoglycerate kinase family. As to quaternary structure, monomer.

It localises to the cytoplasm. The enzyme catalyses (2R)-3-phosphoglycerate + ATP = (2R)-3-phospho-glyceroyl phosphate + ADP. The protein operates within carbohydrate degradation; glycolysis; pyruvate from D-glyceraldehyde 3-phosphate: step 2/5. The polypeptide is Phosphoglycerate kinase (Methanosarcina mazei (strain ATCC BAA-159 / DSM 3647 / Goe1 / Go1 / JCM 11833 / OCM 88) (Methanosarcina frisia)).